Here is a 99-residue protein sequence, read N- to C-terminus: Large ribosomal subunit protein bL21 (99 aa).

It belongs to the bacterial ribosomal protein bL21 family. In terms of assembly, part of the 50S ribosomal subunit. Contacts protein L20.

This protein binds to 23S rRNA in the presence of protein L20. The chain is Large ribosomal subunit protein bL21 from Mesomycoplasma hyopneumoniae (strain 7448) (Mycoplasma hyopneumoniae).